The following is a 122-amino-acid chain: Ribosome-binding factor A (122 aa).

It belongs to the RbfA family. In terms of assembly, monomer. Binds 30S ribosomal subunits, but not 50S ribosomal subunits or 70S ribosomes.

The protein resides in the cytoplasm. Functionally, one of several proteins that assist in the late maturation steps of the functional core of the 30S ribosomal subunit. Associates with free 30S ribosomal subunits (but not with 30S subunits that are part of 70S ribosomes or polysomes). Required for efficient processing of 16S rRNA. May interact with the 5'-terminal helix region of 16S rRNA. This is Ribosome-binding factor A from Anaeromyxobacter sp. (strain Fw109-5).